We begin with the raw amino-acid sequence, 343 residues long: MATVAVALSGGVDSSTTALLMKEAGHRVFTLTMATNDRVAAEAARVSAFLGLPHHVLDISGLFEQRVIGPFCAAYLEGRTPNPCIACNRDLKYGTLFRQAVEWGADYFATGHYARVRFEPEPGRYVLLRARDPRKDQSYVLFYLDQERLARLLLPLGDLTKETVREKARAAGIPFTAAESQEICFVAGDDYRTFIRRRCGQAVAEGPFVDRQGNVLGRHRGIPFYTIGQRRGLGLALGRPVFVLGFNRERNAVIVGPEEELWHTAFLAVDVHYILPQPAGGTLIEAQIRYRAKAAPARLYPQPPDAARVVFEKPQRAITPGQAAVFYQGERVVGGGIISCAVR.

ATP is bound by residues 7-14 (ALSGGVDS) and Met33. The Nucleophile role is filled by Cys87. Cys87 and Cys184 form a disulfide bridge. Gly111 provides a ligand contact to ATP. An interaction with tRNA region spans residues 135-137 (KDQ). Catalysis depends on Cys184, which acts as the Cysteine persulfide intermediate. Positions 289 to 290 (RY) are interaction with tRNA.

It belongs to the MnmA/TRMU family.

Its subcellular location is the cytoplasm. The catalysed reaction is S-sulfanyl-L-cysteinyl-[protein] + uridine(34) in tRNA + AH2 + ATP = 2-thiouridine(34) in tRNA + L-cysteinyl-[protein] + A + AMP + diphosphate + H(+). In terms of biological role, catalyzes the 2-thiolation of uridine at the wobble position (U34) of tRNA, leading to the formation of s(2)U34. In Desulforudis audaxviator (strain MP104C), this protein is tRNA-specific 2-thiouridylase MnmA.